A 488-amino-acid polypeptide reads, in one-letter code: Probable G-protein coupled receptor Mth-like 12 (488 aa).

Residues Met1–Ala17 form the signal peptide. The Extracellular portion of the chain corresponds to Lys18–Pro215. 3 N-linked (GlcNAc...) asparagine glycosylation sites follow: Asn19, Asn34, and Asn55. 5 disulfides stabilise this stretch: Cys27–Cys81, Cys83–Cys88, Cys92–Cys189, Cys93–Cys104, and Cys155–Cys209. Asn141 is a glycosylation site (N-linked (GlcNAc...) asparagine). Residues Gly216–Leu236 traverse the membrane as a helical segment. Residues Ser237–Lys247 lie on the Cytoplasmic side of the membrane. Residues Cys248–Phe268 traverse the membrane as a helical segment. Residues Arg269–Tyr283 lie on the Extracellular side of the membrane. The chain crosses the membrane as a helical span at residues Phe284–Phe304. At Thr305 to Arg315 the chain is on the cytoplasmic side. The chain crosses the membrane as a helical span at residues Phe316 to Ser336. The Extracellular segment spans residues Met337–His373. Asn365 is a glycosylation site (N-linked (GlcNAc...) asparagine). Residues Ile374–Ile394 form a helical membrane-spanning segment. At Trp395–Glu416 the chain is on the cytoplasmic side. Residues Phe417–Leu437 traverse the membrane as a helical segment. At Leu438–Thr454 the chain is on the extracellular side. A helical membrane pass occupies residues Ile455 to Leu475. Topologically, residues Ile476–Arg488 are cytoplasmic.

Belongs to the G-protein coupled receptor 2 family. Mth subfamily.

The protein resides in the cell membrane. The sequence is that of Probable G-protein coupled receptor Mth-like 12 (mthl12) from Drosophila melanogaster (Fruit fly).